Reading from the N-terminus, the 119-residue chain is Defensin-like protein 260 (119 aa).

Residues 1–24 (MKIASLKLLLLVSLLFAVTQNGIS) form the signal peptide. Intrachain disulfides connect Cys44–Cys99, Cys63–Cys79, Cys69–Cys83, and Cys73–Cys85.

This sequence belongs to the DEFL family.

It localises to the secreted. This Arabidopsis thaliana (Mouse-ear cress) protein is Defensin-like protein 260.